Reading from the N-terminus, the 738-residue chain is Putative RNA-binding protein EEED8.10 (738 aa).

In terms of domain architecture, RRM spans 112–201 (RKIVVSNISA…QVMVVSAYVS (90 aa)). The disordered stretch occupies residues 211-237 (LSDDVGSREDTPLSRASSTQSLASGSE). Positions 224 to 237 (SRASSTQSLASGSE) are enriched in polar residues. The 59-residue stretch at 239–297 (SFNLGNVPDKILRRVISFLPIHETIRLERVNKKFMEESIKSWELVNKIALARETVFNKQ) folds into the F-box domain.

The sequence is that of Putative RNA-binding protein EEED8.10 from Caenorhabditis elegans.